A 421-amino-acid polypeptide reads, in one-letter code: Aspartokinase (421 aa).

7–10 (KYGG) is an ATP binding site. 25–30 (RIVATK) contacts substrate. Ser-41 provides a ligand contact to ATP. Residues 45 to 49 (DTTDD), Glu-74, 125 to 126 (LE), 151 to 154 (RGGS), and Ser-154 contribute to the substrate site. ATP is bound by residues 174 to 175 (TD), 180 to 185 (FSADPR), and Lys-210. ACT domains are found at residues 267–348 (VTIV…GKVS) and 349–421 (LIGA…GTGR). Residues Asp-274, 274 to 279 (DIPGYA), 292 to 294 (NID), Gln-298, 360 to 361 (VT), 374 to 375 (NI), and 381 to 382 (SE) each bind substrate.

This sequence belongs to the aspartokinase family. Heterotetramer consisting of 2 isoforms Alpha (catalytic and regulation) and of a homodimer of 2 isoforms Beta (regulation).

It carries out the reaction L-aspartate + ATP = 4-phospho-L-aspartate + ADP. It participates in amino-acid biosynthesis; L-lysine biosynthesis via DAP pathway; (S)-tetrahydrodipicolinate from L-aspartate: step 1/4. Its pathway is amino-acid biosynthesis; L-methionine biosynthesis via de novo pathway; L-homoserine from L-aspartate: step 1/3. The protein operates within amino-acid biosynthesis; L-threonine biosynthesis; L-threonine from L-aspartate: step 1/5. Feedback inhibition by lysine and threonine. Catalyzes the phosphorylation of the beta-carboxyl group of aspartic acid with ATP to yield 4-phospho-L-aspartate, which is involved in the branched biosynthetic pathway leading to the biosynthesis of amino acids lysine, threonine, isoleucine and methionine. The sequence is that of Aspartokinase (ask) from Mycobacterium bovis (strain ATCC BAA-935 / AF2122/97).